We begin with the raw amino-acid sequence, 203 residues long: Probable nicotinate-nucleotide adenylyltransferase (203 aa).

It belongs to the NadD family.

It carries out the reaction nicotinate beta-D-ribonucleotide + ATP + H(+) = deamido-NAD(+) + diphosphate. The protein operates within cofactor biosynthesis; NAD(+) biosynthesis; deamido-NAD(+) from nicotinate D-ribonucleotide: step 1/1. Its function is as follows. Catalyzes the reversible adenylation of nicotinate mononucleotide (NaMN) to nicotinic acid adenine dinucleotide (NaAD). The chain is Probable nicotinate-nucleotide adenylyltransferase from Prosthecochloris aestuarii (strain DSM 271 / SK 413).